The sequence spans 223 residues: Fibroblast growth factor-binding protein 2 (223 aa).

The N-terminal stretch at 1–19 (MKFVPCLLLVTLSCLGTLG) is a signal peptide. The disordered stretch occupies residues 23–45 (RQKQGSTGEEFHFQTGGRDSCTM). 3 disulfide bridges follow: cysteine 43-cysteine 63, cysteine 72-cysteine 106, and cysteine 81-cysteine 117. Residues 120–201 (AGPQAHMQQV…PGGNEEAKKK (82 aa)) are disordered. Residues 125–144 (HMQQVTSSLKGSPEPNQQPE) show a composition bias toward polar residues. The segment covering 175 to 186 (AKPTTRPTAKPT) has biased composition (low complexity). Cysteine 206 and cysteine 214 are oxidised to a cystine.

It belongs to the fibroblast growth factor-binding protein family. Expressed in serum, peripheral leukocytes and cytotoxic T-lymphocytes, but not in granulocytes and monocytes (at protein level).

It localises to the secreted. Its subcellular location is the extracellular space. In Homo sapiens (Human), this protein is Fibroblast growth factor-binding protein 2 (FGFBP2).